Reading from the N-terminus, the 271-residue chain is Glutamate racemase (271 aa).

Residues 10-11 and 42-43 each bind substrate; these read DS and YG. Catalysis depends on Cys-73, which acts as the Proton donor/acceptor. 74-75 lines the substrate pocket; it reads NT. Cys-183 acts as the Proton donor/acceptor in catalysis. 184-185 lines the substrate pocket; sequence TH.

The protein belongs to the aspartate/glutamate racemases family.

The catalysed reaction is L-glutamate = D-glutamate. Its pathway is cell wall biogenesis; peptidoglycan biosynthesis. In terms of biological role, provides the (R)-glutamate required for cell wall biosynthesis. The polypeptide is Glutamate racemase (Streptococcus thermophilus (strain CNRZ 1066)).